Reading from the N-terminus, the 392-residue chain is Outer membrane protein assembly factor BamB (392 aa).

Residues 1–19 form the signal peptide; that stretch reads MQLRKLLLPGLLSVTLLSG. A lipid anchor (N-palmitoyl cysteine) is attached at C20. A lipid anchor (S-diacylglycerol cysteine) is attached at C20.

It belongs to the BamB family. In terms of assembly, part of the Bam complex, which is composed of the outer membrane protein BamA, and four lipoproteins BamB, BamC, BamD and BamE.

The protein resides in the cell outer membrane. In terms of biological role, part of the outer membrane protein assembly complex, which is involved in assembly and insertion of beta-barrel proteins into the outer membrane. In Shigella dysenteriae serotype 1 (strain Sd197), this protein is Outer membrane protein assembly factor BamB.